Reading from the N-terminus, the 151-residue chain is Cathelicidin-3 (151 aa).

The first 17 residues, 1–17 (MLSCWVLLLALLGGACA), serve as a signal peptide directing secretion. Positions 18-122 (LPAPLGYSQA…TCVDSMADPV (105 aa)) are excised as a propeptide. Cystine bridges form between cysteine 75–cysteine 86 and cysteine 97–cysteine 114. Residues 128–148 (WPLVPVAINTVAAGINLYKAI) traverse the membrane as a helical segment.

The protein belongs to the cathelicidin family. Detected in bone marrow, liver and lung.

Its subcellular location is the secreted. The protein localises to the membrane. Functionally, may bind bacterial lipopolysaccharide (LPS). May have antimicrobial activity and play a role in the innate immune response. The protein is Cathelicidin-3 (CATHL3) of Gallus gallus (Chicken).